A 642-amino-acid polypeptide reads, in one-letter code: Threonine--tRNA ligase (642 aa).

Positions 1 to 61 constitute a TGS domain; sequence MPVIRFYDGS…REDAFIEFVD (61 aa). The interval 243 to 534 is catalytic; that stretch reads DHRKIGKFLQ…LIEECSGNLP (292 aa). Zn(2+) is bound by residues Cys-334, His-385, and His-511.

This sequence belongs to the class-II aminoacyl-tRNA synthetase family. As to quaternary structure, homodimer. It depends on Zn(2+) as a cofactor.

It is found in the cytoplasm. The catalysed reaction is tRNA(Thr) + L-threonine + ATP = L-threonyl-tRNA(Thr) + AMP + diphosphate + H(+). Functionally, catalyzes the attachment of threonine to tRNA(Thr) in a two-step reaction: L-threonine is first activated by ATP to form Thr-AMP and then transferred to the acceptor end of tRNA(Thr). Also edits incorrectly charged L-seryl-tRNA(Thr). The polypeptide is Threonine--tRNA ligase (Buchnera aphidicola subsp. Acyrthosiphon pisum (strain Tuc7)).